Consider the following 456-residue polypeptide: uncharacterized protein (456 aa).

The YrdC-like domain maps to 277-440; it reads IKNTKTIKQL…TKQLVRTTAK (164 aa).

This is an uncharacterized protein from Mycoplasma genitalium (strain ATCC 33530 / DSM 19775 / NCTC 10195 / G37) (Mycoplasmoides genitalium).